We begin with the raw amino-acid sequence, 499 residues long: Glycerol kinase (499 aa).

Thr15 serves as a coordination point for ADP. 3 residues coordinate ATP: Thr15, Thr16, and Ser17. Sn-glycerol 3-phosphate is bound at residue Thr15. Arg19 contacts ADP. Sn-glycerol 3-phosphate is bound by residues Arg85, Glu86, Tyr137, and Asp246. Glycerol contacts are provided by Arg85, Glu86, Tyr137, Asp246, and Gln247. 2 residues coordinate ADP: Thr268 and Gly311. ATP is bound by residues Thr268, Gly311, Gln315, and Gly412. The ADP site is built by Gly412 and Asn416.

Belongs to the FGGY kinase family.

The enzyme catalyses glycerol + ATP = sn-glycerol 3-phosphate + ADP + H(+). It functions in the pathway polyol metabolism; glycerol degradation via glycerol kinase pathway; sn-glycerol 3-phosphate from glycerol: step 1/1. Inhibited by fructose 1,6-bisphosphate (FBP). Its function is as follows. Key enzyme in the regulation of glycerol uptake and metabolism. Catalyzes the phosphorylation of glycerol to yield sn-glycerol 3-phosphate. The chain is Glycerol kinase from Parabacteroides distasonis (strain ATCC 8503 / DSM 20701 / CIP 104284 / JCM 5825 / NCTC 11152).